Consider the following 169-residue polypeptide: 2-C-methyl-D-erythritol 2,4-cyclodiphosphate synthase (169 aa).

A divalent metal cation-binding residues include Asp13 and His15. 4-CDP-2-C-methyl-D-erythritol 2-phosphate contacts are provided by residues 13–15 (DIH) and 40–41 (HS). An a divalent metal cation-binding site is contributed by His48. 4-CDP-2-C-methyl-D-erythritol 2-phosphate-binding positions include 62–64 (DIG), 138–141 (TTNE), and Arg148.

Belongs to the IspF family. As to quaternary structure, homotrimer. A divalent metal cation serves as cofactor.

The catalysed reaction is 4-CDP-2-C-methyl-D-erythritol 2-phosphate = 2-C-methyl-D-erythritol 2,4-cyclic diphosphate + CMP. It participates in isoprenoid biosynthesis; isopentenyl diphosphate biosynthesis via DXP pathway; isopentenyl diphosphate from 1-deoxy-D-xylulose 5-phosphate: step 4/6. In terms of biological role, involved in the biosynthesis of isopentenyl diphosphate (IPP) and dimethylallyl diphosphate (DMAPP), two major building blocks of isoprenoid compounds. Catalyzes the conversion of 4-diphosphocytidyl-2-C-methyl-D-erythritol 2-phosphate (CDP-ME2P) to 2-C-methyl-D-erythritol 2,4-cyclodiphosphate (ME-CPP) with a corresponding release of cytidine 5-monophosphate (CMP). This Akkermansia muciniphila (strain ATCC BAA-835 / DSM 22959 / JCM 33894 / BCRC 81048 / CCUG 64013 / CIP 107961 / Muc) protein is 2-C-methyl-D-erythritol 2,4-cyclodiphosphate synthase.